The sequence spans 448 residues: Probable glycine dehydrogenase (decarboxylating) subunit 1 (448 aa).

Belongs to the GcvP family. N-terminal subunit subfamily. As to quaternary structure, the glycine cleavage system is composed of four proteins: P, T, L and H. In this organism, the P 'protein' is a heterodimer of two subunits.

It carries out the reaction N(6)-[(R)-lipoyl]-L-lysyl-[glycine-cleavage complex H protein] + glycine + H(+) = N(6)-[(R)-S(8)-aminomethyldihydrolipoyl]-L-lysyl-[glycine-cleavage complex H protein] + CO2. Its function is as follows. The glycine cleavage system catalyzes the degradation of glycine. The P protein binds the alpha-amino group of glycine through its pyridoxal phosphate cofactor; CO(2) is released and the remaining methylamine moiety is then transferred to the lipoamide cofactor of the H protein. The sequence is that of Probable glycine dehydrogenase (decarboxylating) subunit 1 from Listeria monocytogenes serotype 4a (strain HCC23).